The following is a 444-amino-acid chain: MARTRNRFDRTPFQTAITDLSHDGRGVARRDGEGGKVTFISGALPGELVRAEPTARSRHFDEAKTVEVLEASPQRVAPRCPHFGVCAGCVLQHLEESQQIVAKQRVLMDNLERIGHVTPQAVLPGLTGDNWGYRRKGRFSVRRVEKKAKTLVGFRELDPRFVADLSVCYTVIPQIGEKIPLLAALVEGMDGKRDIPQIEFIAGDDAVALTIRHMQPLSARDQQAWIAFAQEHGFAIFLQPGGVDSVHPLWPQEVPLSFRLPQWDVDLAFRPLDFIQVNASLNQKMIVHALALLDAKPDDRVLDLFCGLGNFTLPLARVVREVVGVEGDAGLVARAKDNAQRNGLDNAQFYAADLTQDQRNAAWMRQGFDKLLLDPPRSGALEVLQQLPLKTFERIVYVSCHPGSLARDAGYLVNEQGFTLVSAGAMDMFPHTAHVESIAVFERR.

The TRAM domain maps to 5 to 67; that stretch reads RNRFDRTPFQ…RHFDEAKTVE (63 aa). 4 residues coordinate [4Fe-4S] cluster: C80, C86, C89, and C168. S-adenosyl-L-methionine contacts are provided by Q276, F305, N310, E326, D353, and D374. The Nucleophile role is filled by C400.

It belongs to the class I-like SAM-binding methyltransferase superfamily. RNA M5U methyltransferase family. RlmD subfamily.

The enzyme catalyses uridine(1939) in 23S rRNA + S-adenosyl-L-methionine = 5-methyluridine(1939) in 23S rRNA + S-adenosyl-L-homocysteine + H(+). Its function is as follows. Catalyzes the formation of 5-methyl-uridine at position 1939 (m5U1939) in 23S rRNA. The chain is 23S rRNA (uracil(1939)-C(5))-methyltransferase RlmD from Xanthomonas oryzae pv. oryzae (strain MAFF 311018).